Reading from the N-terminus, the 37-residue chain is Large ribosomal subunit protein bL36 (37 aa).

It belongs to the bacterial ribosomal protein bL36 family.

This chain is Large ribosomal subunit protein bL36, found in Synechococcus sp. (strain CC9605).